The chain runs to 323 residues: tRNA-dihydrouridine synthase B (323 aa).

FMN is bound by residues 16 to 18 and glutamine 70; that span reads PMA. Catalysis depends on cysteine 100, which acts as the Proton donor. Residues lysine 139, 200–202, and 224–225 contribute to the FMN site; these read NGD and GR.

Belongs to the Dus family. DusB subfamily. FMN serves as cofactor.

It catalyses the reaction a 5,6-dihydrouridine in tRNA + NAD(+) = a uridine in tRNA + NADH + H(+). It carries out the reaction a 5,6-dihydrouridine in tRNA + NADP(+) = a uridine in tRNA + NADPH + H(+). In terms of biological role, catalyzes the synthesis of 5,6-dihydrouridine (D), a modified base found in the D-loop of most tRNAs, via the reduction of the C5-C6 double bond in target uridines. The chain is tRNA-dihydrouridine synthase B from Proteus vulgaris.